The chain runs to 420 residues: MVTLVLGSQFGDEGKGKITDLLSQNADLCCRSAGGHNAGHTIIHDNVTYDFHILPSGLISPKCVNLIGSGTVVHVPSFFKELEALEGKGLKDAHKRVFISDRAHVCFDLHSVVDGLEEATLGGRKVGTTGKGIGPCYSDKAARRGVRIGQVLDEGVVETKLRSLEAGYRRRFGELNYDLEAEINRFKEYRTLLKPFVVDQLTLLRKHKDASILIEGANALMLDIDHGTYPYVTSSCTGLGGTIQGLCLNPTQIKSIIGVVKAYSTRVGSGPFPTEQINEIGEKLQVTGREFGVTTGRKRRCGWLDLVMCRYSTAINHYTALNLTKLDILDEFDEIKVAVAYRLEGKEIEFFPSDADVLEKVEVVYDTLPGWKTNTMGITKWEDLPPNAQKYIEYIEKDIGVPIKWVGTGPARSHMIERAQ.

Residues 11–17 (GDEGKGK) and 39–41 (GHT) each bind GTP. Catalysis depends on Asp12, which acts as the Proton acceptor. Residues Asp12 and Gly39 each coordinate Mg(2+). IMP-binding positions include 12–15 (DEGK), 37–40 (NAGH), Thr129, Arg143, Asn218, Thr233, and Arg297. The Proton donor role is filled by His40. Residue 293-299 (VTTGRKR) coordinates substrate. Residues Arg299, 325–327 (KLD), and 407–409 (GTG) each bind GTP.

Belongs to the adenylosuccinate synthetase family. Homodimer. Mg(2+) is required as a cofactor.

Its subcellular location is the cytoplasm. The catalysed reaction is IMP + L-aspartate + GTP = N(6)-(1,2-dicarboxyethyl)-AMP + GDP + phosphate + 2 H(+). It functions in the pathway purine metabolism; AMP biosynthesis via de novo pathway; AMP from IMP: step 1/2. Functionally, plays an important role in the de novo pathway and in the salvage pathway of purine nucleotide biosynthesis. Catalyzes the first committed step in the biosynthesis of AMP from IMP. The polypeptide is Adenylosuccinate synthetase (Uncinocarpus reesii (strain UAMH 1704)).